The chain runs to 427 residues: Dihydroorotase (427 aa).

Zn(2+) is bound by residues His-60 and His-62. Substrate is bound by residues 62–64 (HFR) and Asn-94. The Zn(2+) site is built by Asp-152, His-179, and His-232. Asn-278 lines the substrate pocket. Residue Asp-305 participates in Zn(2+) binding. The active site involves Asp-305. Residues His-309 and 323–324 (FG) each bind substrate.

This sequence belongs to the metallo-dependent hydrolases superfamily. DHOase family. Class I DHOase subfamily. It depends on Zn(2+) as a cofactor.

It carries out the reaction (S)-dihydroorotate + H2O = N-carbamoyl-L-aspartate + H(+). The protein operates within pyrimidine metabolism; UMP biosynthesis via de novo pathway; (S)-dihydroorotate from bicarbonate: step 3/3. Its function is as follows. Catalyzes the reversible cyclization of carbamoyl aspartate to dihydroorotate. The chain is Dihydroorotase from Enterococcus faecalis (strain ATCC 700802 / V583).